A 354-amino-acid polypeptide reads, in one-letter code: Probable L-ascorbate-6-phosphate lactonase UlaG (354 aa).

Belongs to the UlaG family. A divalent metal cation is required as a cofactor.

The protein localises to the cytoplasm. The enzyme catalyses L-ascorbate 6-phosphate + H2O = 3-dehydro-L-gulonate 6-phosphate. It participates in cofactor degradation; L-ascorbate degradation; D-xylulose 5-phosphate from L-ascorbate: step 1/4. Probably catalyzes the hydrolysis of L-ascorbate-6-P into 3-keto-L-gulonate-6-P. Is essential for L-ascorbate utilization under anaerobic conditions. The chain is Probable L-ascorbate-6-phosphate lactonase UlaG from Salmonella choleraesuis (strain SC-B67).